Consider the following 455-residue polypeptide: ATP-dependent protease ATPase subunit HslU (455 aa).

ATP contacts are provided by residues Ile-19 and 61 to 66 (GVGKTE). Positions 144–163 (ESKVGFANEPAEDAASKKEK) are disordered. Asp-268, Glu-333, and Arg-405 together coordinate ATP.

This sequence belongs to the ClpX chaperone family. HslU subfamily. A double ring-shaped homohexamer of HslV is capped on each side by a ring-shaped HslU homohexamer. The assembly of the HslU/HslV complex is dependent on binding of ATP.

It is found in the cytoplasm. ATPase subunit of a proteasome-like degradation complex; this subunit has chaperone activity. The binding of ATP and its subsequent hydrolysis by HslU are essential for unfolding of protein substrates subsequently hydrolyzed by HslV. HslU recognizes the N-terminal part of its protein substrates and unfolds these before they are guided to HslV for hydrolysis. In Francisella tularensis subsp. novicida (strain U112), this protein is ATP-dependent protease ATPase subunit HslU.